A 431-amino-acid polypeptide reads, in one-letter code: tRNA(Ile)-lysidine synthase (431 aa).

26-31 lines the ATP pocket; the sequence is SGGVDS.

Belongs to the tRNA(Ile)-lysidine synthase family.

The protein resides in the cytoplasm. It carries out the reaction cytidine(34) in tRNA(Ile2) + L-lysine + ATP = lysidine(34) in tRNA(Ile2) + AMP + diphosphate + H(+). Functionally, ligates lysine onto the cytidine present at position 34 of the AUA codon-specific tRNA(Ile) that contains the anticodon CAU, in an ATP-dependent manner. Cytidine is converted to lysidine, thus changing the amino acid specificity of the tRNA from methionine to isoleucine. In Wolbachia pipientis wMel, this protein is tRNA(Ile)-lysidine synthase.